The following is a 99-amino-acid chain: Acylphosphatase-1 (99 aa).

A2 bears the N-acetylalanine mark. An Acylphosphatase-like domain is found at 9–99 (SVDYEIFGKV…LDYSDFQIVK (91 aa)). Residues R24 and N42 contribute to the active site.

Belongs to the acylphosphatase family. In terms of tissue distribution, organ-common type isozyme is found in many different tissues.

The catalysed reaction is an acyl phosphate + H2O = a carboxylate + phosphate + H(+). The polypeptide is Acylphosphatase-1 (ACYP1) (Homo sapiens (Human)).